We begin with the raw amino-acid sequence, 299 residues long: tRNA dimethylallyltransferase (299 aa).

13-20 contacts ATP; sequence GPTASGKT. 15–20 is a substrate binding site; it reads TASGKT. The tract at residues 38-41 is interaction with substrate tRNA; the sequence is DSRQ.

It belongs to the IPP transferase family. As to quaternary structure, monomer. Requires Mg(2+) as cofactor.

It catalyses the reaction adenosine(37) in tRNA + dimethylallyl diphosphate = N(6)-dimethylallyladenosine(37) in tRNA + diphosphate. Functionally, catalyzes the transfer of a dimethylallyl group onto the adenine at position 37 in tRNAs that read codons beginning with uridine, leading to the formation of N6-(dimethylallyl)adenosine (i(6)A). This Prochlorococcus marinus (strain AS9601) protein is tRNA dimethylallyltransferase.